Here is a 611-residue protein sequence, read N- to C-terminus: Major facilitator superfamily domain-containing protein YCR023C (611 aa).

Topologically, residues 1-89 (MARQKLTFKE…GRFSEKHGRK (89 aa)) are extracellular. A helical membrane pass occupies residues 90 to 110 (ITLTCGLIGTSVSLLILGFSR). At 111–152 (NFYQALVARSLMGLLNGNVGVIRTIIGEIATERKHQALAFST) the chain is on the cytoplasmic side. A helical membrane pass occupies residues 153–173 (MPLLFQFGAVVGPMIGGFLVF). The Extracellular portion of the chain corresponds to 174–199 (RDGTMNEVPLWFPHFAKRIIRSYPYA). Residues 200–220 (LPNVVVCMFLMFGLTNATLFL) form a helical membrane-spanning segment. Residues 221–353 (EETHPAFKDR…SIFHHVFHTK (133 aa)) are Cytoplasmic-facing. A compositionally biased stretch (basic and acidic residues) spans 261 to 271 (DDSENIHHRNE). Residues 261 to 301 (DDSENIHHRNENVNSIRGQDSEEDENSPLVNTTNDDDTESI) form a disordered region. At Ser-313 the chain carries Phosphoserine. The helical transmembrane segment at 354-372 (VFYPISVNFIMALHLIVYN) threads the bilayer. Over 373 to 413 (EFLPVFLAYDLAVDPENPKKLASKFPWKISGGIGYEPEQTG) the chain is Extracellular. Residues 414-434 (TLLSTTGIFGCFVVIFIFPIV) traverse the membrane as a helical segment. Residues 435-442 (DRNFDCLT) are Cytoplasmic-facing. The chain crosses the membrane as a helical span at residues 443–463 (IFRTLVKLYPIMYVMVPYVVF). Residues 464-542 (LQNERIPSWY…YIMSWSQQND (79 aa)) lie on the Extracellular side of the membrane. The chain crosses the membrane as a helical span at residues 543–563 (VAWVSWWSLSLFCMVALYQSY). At 564–611 (KIAPIDDNENELHGQGSEDAYNSQSQSSDLRMAHRSSLSSLSNQRCTT) the chain is on the cytoplasmic side. Phosphoserine is present on Ser-603.

Belongs to the major facilitator superfamily.

The protein resides in the membrane. It carries out the reaction chloride(in) = chloride(out). In terms of biological role, outward-rectifying chloride channel involved in chloride homeostasis. This chain is Major facilitator superfamily domain-containing protein YCR023C, found in Saccharomyces cerevisiae (strain ATCC 204508 / S288c) (Baker's yeast).